We begin with the raw amino-acid sequence, 897 residues long: N-terminal acetyltransferase A complex auxiliary subunit NAA15 (897 aa).

7 TPR repeats span residues 77 to 110 (HVCW…DPDN), 111 to 144 (LEIL…KPNH), 189 to 222 (TEMI…IVDK), 223 to 256 (LSYK…NPDN), 298 to 331 (SSAV…KGVP), 380 to 413 (LWTL…TPTV), and 488 to 523 (QCMW…YADI). Disordered regions lie at residues 578–640 (KSTA…DPHG) and 863–897 (SRKS…SVAT). A compositionally biased stretch (basic and acidic residues) spans 602–617 (KAEARAKKEAESKSEE). Polar residues predominate over residues 863-872 (SRKSNENGDT).

As to quaternary structure, part of the NatA complex. Associates with ribosomes. Interacts with NAA10. In terms of tissue distribution, expressed in leaves, roots, shoots and flowers.

Its function is as follows. Auxiliary subunit of the NatA N-alpha-acetyltransferase complex. Required for male gametocyte development, embryogenesis, suspensor development and the formation of the quiescent center (QC) in the root meristem. Involved in plant immunity through the regulation of SNC1 stability. Required for embryo development. This is N-terminal acetyltransferase A complex auxiliary subunit NAA15 from Arabidopsis thaliana (Mouse-ear cress).